A 277-amino-acid polypeptide reads, in one-letter code: NADPH-dependent 7-cyano-7-deazaguanine reductase (277 aa).

83–85 contacts substrate; the sequence is IES. Position 85-86 (85-86) interacts with NADPH; the sequence is SK. Cys-184 (thioimide intermediate) is an active-site residue. The active-site Proton donor is the Asp-191. 223 to 224 provides a ligand contact to substrate; it reads HE. An NADPH-binding site is contributed by 252-253; it reads RG.

It belongs to the GTP cyclohydrolase I family. QueF type 2 subfamily. Homodimer.

The protein localises to the cytoplasm. The catalysed reaction is 7-aminomethyl-7-carbaguanine + 2 NADP(+) = 7-cyano-7-deazaguanine + 2 NADPH + 3 H(+). Its pathway is tRNA modification; tRNA-queuosine biosynthesis. Functionally, catalyzes the NADPH-dependent reduction of 7-cyano-7-deazaguanine (preQ0) to 7-aminomethyl-7-deazaguanine (preQ1). The polypeptide is NADPH-dependent 7-cyano-7-deazaguanine reductase (Cupriavidus necator (strain ATCC 17699 / DSM 428 / KCTC 22496 / NCIMB 10442 / H16 / Stanier 337) (Ralstonia eutropha)).